The following is a 95-amino-acid chain: DNA-directed RNA polymerase subunit Rpo11 (95 aa).

This sequence belongs to the archaeal Rpo11/eukaryotic RPB11/RPC19 RNA polymerase subunit family. As to quaternary structure, part of the RNA polymerase complex.

It is found in the cytoplasm. It carries out the reaction RNA(n) + a ribonucleoside 5'-triphosphate = RNA(n+1) + diphosphate. Its function is as follows. DNA-dependent RNA polymerase (RNAP) catalyzes the transcription of DNA into RNA using the four ribonucleoside triphosphates as substrates. The protein is DNA-directed RNA polymerase subunit Rpo11 of Pyrococcus horikoshii (strain ATCC 700860 / DSM 12428 / JCM 9974 / NBRC 100139 / OT-3).